The chain runs to 387 residues: tRNA pseudouridine synthase B (387 aa).

Asp43 acts as the Nucleophile in catalysis.

The protein belongs to the pseudouridine synthase TruB family. Type 1 subfamily.

The enzyme catalyses uridine(55) in tRNA = pseudouridine(55) in tRNA. Responsible for synthesis of pseudouridine from uracil-55 in the psi GC loop of transfer RNAs. The protein is tRNA pseudouridine synthase B of Bifidobacterium longum subsp. infantis (strain ATCC 15697 / DSM 20088 / JCM 1222 / NCTC 11817 / S12).